A 333-amino-acid polypeptide reads, in one-letter code: MRPILLQGHERSITQIKYNREGDLLFTVAKDPIVNVWYSVNGERLGTYMGHTGAVWCVDADWDTKHVLTGSADNSCRLWDCETGKQLALLKTNSAVRTCGFDFGGNIIMFSTDKQMGYQCFVSFFDLRDPSQIDNNEPYMKIPCNDSKITSAVWGPLGECIIAGHESGELNQYSAKSGEVLVNVKEHSRQINDIQLSREMTMFVTASKDNTAKLFDSTTLEHQKTFRTEPPRELAALSPNYEHVVVGGGQEAMDVTTTSTRIGKFEARFFHLAFEEEFGRVKGHFGPINSVAFHPDGKSYSSGGEDGYVRIHYFDPQYFEFEFEAREAGSPSG.

WD repeat units follow at residues 8 to 47, 50 to 91, 144 to 183, and 186 to 225; these read GHER…RLGT, GHTG…ALLK, CNDS…VLVN, and EHSR…HQKT. T219 is modified (phosphothreonine). The residue at position 264 (K264) is an N6-acetyllysine. A Glycyl lysine isopeptide (Lys-Gly) (interchain with G-Cter in ubiquitin) cross-link involves residue K282. Residues 283 to 324 form a WD 5 repeat; sequence GHFGPINSVAFHPDGKSYSSGGEDGYVRIHYFDPQYFEFEFE. At Y308 the chain carries Phosphotyrosine.

It belongs to the eIF-3 subunit I family. In terms of assembly, component of the eukaryotic translation initiation factor 3 (eIF-3) complex, which is composed of 13 subunits: EIF3A, EIF3B, EIF3C, EIF3D, EIF3E, EIF3F, EIF3G, EIF3H, EIF3I, EIF3J, EIF3K, EIF3L and EIF3M. The eIF-3 complex appears to include 3 stable modules: module A is composed of EIF3A, EIF3B, EIF3G and EIF3I; module B is composed of EIF3F, EIF3H, and EIF3M; and module C is composed of EIF3C, EIF3D, EIF3E, EIF3K and EIF3L. EIF3C of module C binds EIF3B of module A and EIF3H of module B, thereby linking the three modules. EIF3J is a labile subunit that binds to the eIF-3 complex via EIF3B. The eIF-3 complex interacts with RPS6KB1 under conditions of nutrient depletion. Mitogenic stimulation leads to binding and activation of a complex composed of MTOR and RPTOR, leading to phosphorylation and release of RPS6KB1 and binding of EIF4B to eIF-3. In terms of processing, phosphorylated by TGF-beta type II receptor.

It is found in the cytoplasm. Functionally, component of the eukaryotic translation initiation factor 3 (eIF-3) complex, which is required for several steps in the initiation of protein synthesis. The eIF-3 complex associates with the 40S ribosome and facilitates the recruitment of eIF-1, eIF-1A, eIF-2:GTP:methionyl-tRNAi and eIF-5 to form the 43S pre-initiation complex (43S PIC). The eIF-3 complex stimulates mRNA recruitment to the 43S PIC and scanning of the mRNA for AUG recognition. The eIF-3 complex is also required for disassembly and recycling of post-termination ribosomal complexes and subsequently prevents premature joining of the 40S and 60S ribosomal subunits prior to initiation. The eIF-3 complex specifically targets and initiates translation of a subset of mRNAs involved in cell proliferation, including cell cycling, differentiation and apoptosis, and uses different modes of RNA stem-loop binding to exert either translational activation or repression. The chain is Eukaryotic translation initiation factor 3 subunit I from Oryctolagus cuniculus (Rabbit).